Reading from the N-terminus, the 268-residue chain is Probable intron-encoded DNA endonuclease 1 (268 aa).

This sequence belongs to the LAGLIDADG endonuclease family.

The protein resides in the mitochondrion. Mitochondrial DNA endonuclease involved in intron homing. The chain is Probable intron-encoded DNA endonuclease 1 (hegI1) from Mycosarcoma maydis (Corn smut fungus).